The sequence spans 353 residues: UPF0283 membrane protein YcjF (353 aa).

A run of 3 helical transmembrane segments spans residues 70–90 (MVMGGLALFGASVVGQGVQWT), 100–120 (VALGGCAAGALIIGAGVGSVV), and 213–233 (ESTLMIAVSPLALVDMAFIAW).

It belongs to the UPF0283 family.

It is found in the cell inner membrane. In Shigella boydii serotype 4 (strain Sb227), this protein is UPF0283 membrane protein YcjF.